A 110-amino-acid chain; its full sequence is Class I hydrophobin Po.HYD (110 aa).

A signal peptide spans 1–27 (MFSKATLFFTTVSRYRDTQAPIPTGQT). Cystine bridges form between cysteine 35/cysteine 91, cysteine 42/cysteine 85, cysteine 43/cysteine 75, and cysteine 92/cysteine 105.

The protein belongs to the fungal hydrophobin family. Self-assembles to form functional amyloid fibrils called rodlets. Self-assembly into fibrillar rodlets occurs spontaneously at hydrophobic:hydrophilic interfaces and the rodlets further associate laterally to form amphipathic monolayers.

The protein localises to the secreted. The protein resides in the cell wall. In terms of biological role, aerial growth, conidiation, and dispersal of filamentous fungi in the environment rely upon a capability of their secreting small amphipathic proteins called hydrophobins (HPBs) with low sequence identity. Class I can self-assemble into an outermost layer of rodlet bundles on aerial cell surfaces, conferring cellular hydrophobicity that supports fungal growth, development and dispersal; whereas Class II form highly ordered films at water-air interfaces through intermolecular interactions but contribute nothing to the rodlet structure. The polypeptide is Class I hydrophobin Po.HYD (Pleurotus ostreatus (Oyster mushroom)).